A 473-amino-acid polypeptide reads, in one-letter code: Photosystem II CP43 reaction center protein (473 aa).

Residues Met1 to Glu14 constitute a propeptide that is removed on maturation. N-acetylthreonine is present on Thr15. A Phosphothreonine modification is found at Thr15. Transmembrane regions (helical) follow at residues Leu69–Ala93, Leu134–Asn155, Lys178–Thr200, Lys255–Ser275, and Trp291–Ala312. [CaMn4O5] cluster is bound at residue Glu367. Residues Arg447–Pro471 form a helical membrane-spanning segment.

It belongs to the PsbB/PsbC family. PsbC subfamily. As to quaternary structure, PSII is composed of 1 copy each of membrane proteins PsbA, PsbB, PsbC, PsbD, PsbE, PsbF, PsbH, PsbI, PsbJ, PsbK, PsbL, PsbM, PsbT, PsbX, PsbY, PsbZ, Psb30/Ycf12, at least 3 peripheral proteins of the oxygen-evolving complex and a large number of cofactors. It forms dimeric complexes. It depends on Binds multiple chlorophylls and provides some of the ligands for the Ca-4Mn-5O cluster of the oxygen-evolving complex. It may also provide a ligand for a Cl- that is required for oxygen evolution. PSII binds additional chlorophylls, carotenoids and specific lipids. as a cofactor.

The protein resides in the plastid. It localises to the chloroplast thylakoid membrane. Functionally, one of the components of the core complex of photosystem II (PSII). It binds chlorophyll and helps catalyze the primary light-induced photochemical processes of PSII. PSII is a light-driven water:plastoquinone oxidoreductase, using light energy to abstract electrons from H(2)O, generating O(2) and a proton gradient subsequently used for ATP formation. The protein is Photosystem II CP43 reaction center protein of Piper cenocladum (Ant piper).